We begin with the raw amino-acid sequence, 886 residues long: MGDFQSRYEILAAIMGPPNTASFKEEEHSGSQTKNYPVVVKCIQEHDPVDTTNVLVADDLDSNFEPFSITDDYGKYENTLVSHSSTILNEPYNESPSSSSSDSSSRSTSPFSQLSSQSLRLNAEEIAPSSLINKAVQSTLRLSEPLVSPIKCPLSEQFINFINQQDSDKVVLIRGFLLPHLASLTTKNVSEPELDKLRHSLYNWWVSILRRLQSNISTSERITYTKAILAIAKHHCWNKVEHSALLYLEHQLILYDTLTFVVHLLSQKSLPYSLTTFCASILVLSFFQLPLFADHFLSALDVKKKYIDALGSSFDEKIMIISHKYLAPFFTDQFSSTMHPYYPKRTSTPFTIGYNRQPIEFTRAWMRRFKSSTGGFFFEFLSCYHSFLALQFSFELPDNVIYFAPGYICLHAYLLELTISVIHISDKKPLMLPTGHEQFPCKTLPEVNPSMEEYNPKMPVTATTLSTLQQFVGHIKDAFKKIGDCRQEQMRLLAVLEQVLINVAKNTPAFNLQSCFLLCSLVEQCFGVFNDFSHRFDFSFWISVAKRLISTSHNMSIVRSITFIYAVWPYLDIKSKELVTLQWLLEENTFQELFLHWSPLVRAYFQRLVCWRFLKLDDMEEFQFKGTVTLRVKNLLKHYFTAQALYHEECLVNGRASPITKPSEPVPMRRLTIVCNHYQNYGNSESTEFELSNYKQDDGTIQALVTDVVSISNSFSSGLKKAFGSLFKNVSGLPAETEIAYHHTLSASNSYVFTDLVDNPDSMLKSTLKYRFVFKFSPSQPLSSLGKNKEKYDALLERSSHGVLPVQSKMLLYNSNHISCPLSSIKGVSVNGKRLVYTSRALVEWALVVNEFDHALSLRKGNETEDMEAPTLTVRIPKSYASNIYN.

Positions 87–112 are disordered; the sequence is ILNEPYNESPSSSSSDSSSRSTSPFS. Residues 95–112 are compositionally biased toward low complexity; it reads SPSSSSSDSSSRSTSPFS. 3 helical membrane passes run 277–297, 374–394, and 400–420; these read FCAS…DHFL, GGFF…QFSF, and VIYF…LTIS.

This sequence belongs to the UPF0592 family.

The protein resides in the membrane. This is UPF0592 membrane protein C7D4.03c from Schizosaccharomyces pombe (strain 972 / ATCC 24843) (Fission yeast).